A 750-amino-acid polypeptide reads, in one-letter code: Phosphate transporter PHO1 homolog 7 (750 aa).

The region spanning 1 to 298 (MKFGKDFVRQ…SRSAAKPYME (298 aa)) is the SPX domain. The Cytoplasmic portion of the chain corresponds to 1 to 350 (MKFGKDFVRQ…KVKKEKHRIT (350 aa)). A helical membrane pass occupies residues 351–371 (FSTGFFVGCTVSLVVALVMFI). Over 372 to 391 (HARNIMGAVGHKVYMETMFP) the chain is Extracellular. A helical transmembrane segment spans residues 392–412 (LYSLFAFVVLHMIMYASNIYF). Over 413–435 (WKRYRVNYPFIFGFKEGTELGYR) the chain is Cytoplasmic. Residues 436 to 456 (HVLLLSFGLGTLALCAVLINL) traverse the membrane as a helical segment. The Extracellular segment spans residues 457–472 (DMEMDPNTNDYKTMTE). Residues 473–493 (LLPMFILALVVAILFCPFNIF) form a helical membrane-spanning segment. The Cytoplasmic portion of the chain corresponds to 494 to 622 (YRSSRVFFLM…YSFNRGNIWK (129 aa)). An EXS domain is found at 557–750 (RSSDVYSTFY…NYNEEEDRDS (194 aa)). Residues 623 to 643 (ISAWVFSALATFYGTYWDIVF) traverse the membrane as a helical segment. The Extracellular segment spans residues 644-666 (DWGLLHRPSKHLLREKLLVPHKA). The chain crosses the membrane as a helical span at residues 667–687 (VYYVAIVLNIVLRMAWLQTVL). The Cytoplasmic segment spans residues 688 to 750 (DFNLSFLHRE…NYNEEEDRDS (63 aa)).

It belongs to the SYG1 (TC 2.A.94) family. As to expression, expressed in root tips, vascular cylinders of roots and filaments, leaf hydathodes, stem, receptacle and stigma apex.

The protein resides in the cell membrane. May transport inorganic phosphate (Pi). The polypeptide is Phosphate transporter PHO1 homolog 7 (PHO1-H7) (Arabidopsis thaliana (Mouse-ear cress)).